Reading from the N-terminus, the 805-residue chain is Translation initiation factor IF-2 (805 aa).

Disordered stretches follow at residues 68-89 (VVTE…EKKE) and 141-215 (KEKE…KEKK). Over residues 79-89 (VEEKKEEEKKE) the composition is skewed to basic and acidic residues. The tr-type G domain maps to 306 to 474 (PRPPIVVVMG…MILLLADILE (169 aa)). A G1 region spans residues 315 to 322 (GHVDHGKT). Residue 315–322 (GHVDHGKT) coordinates GTP. A G2 region spans residues 340–344 (GITQH). Residues 362–365 (DTPG) are G3. GTP-binding positions include 362-366 (DTPGH) and 416-419 (NKID). Positions 416-419 (NKID) are G4. The interval 452-454 (SAK) is G5.

This sequence belongs to the TRAFAC class translation factor GTPase superfamily. Classic translation factor GTPase family. IF-2 subfamily.

Its subcellular location is the cytoplasm. Functionally, one of the essential components for the initiation of protein synthesis. Protects formylmethionyl-tRNA from spontaneous hydrolysis and promotes its binding to the 30S ribosomal subunits. Also involved in the hydrolysis of GTP during the formation of the 70S ribosomal complex. In Aquifex aeolicus (strain VF5), this protein is Translation initiation factor IF-2 (infB).